The following is a 233-amino-acid chain: Tropomyosin (233 aa).

Positions 6–222 (FDTVNEKYQE…KERYKAISDE (217 aa)) form a coiled coil. A disordered region spans residues 48–88 (MERSEERLQTATEKLEEASKAADESERNRKVLENLNNASEE). Positions 51–79 (SEERLQTATEKLEEASKAADESERNRKVL) are enriched in basic and acidic residues.

This sequence belongs to the tropomyosin family. Homodimer.

Tropomyosin, in association with the troponin complex, plays a central role in the calcium dependent regulation of muscle contraction. The chain is Tropomyosin from Magallana gigas (Pacific oyster).